A 529-amino-acid polypeptide reads, in one-letter code: Bifunctional purine biosynthesis protein PurH (529 aa).

The region spanning 1-148 is the MGS-like domain; it reads MQQRRPVRRA…KNHKDVAIVV (148 aa).

This sequence belongs to the PurH family.

The enzyme catalyses (6R)-10-formyltetrahydrofolate + 5-amino-1-(5-phospho-beta-D-ribosyl)imidazole-4-carboxamide = 5-formamido-1-(5-phospho-D-ribosyl)imidazole-4-carboxamide + (6S)-5,6,7,8-tetrahydrofolate. It catalyses the reaction IMP + H2O = 5-formamido-1-(5-phospho-D-ribosyl)imidazole-4-carboxamide. It participates in purine metabolism; IMP biosynthesis via de novo pathway; 5-formamido-1-(5-phospho-D-ribosyl)imidazole-4-carboxamide from 5-amino-1-(5-phospho-D-ribosyl)imidazole-4-carboxamide (10-formyl THF route): step 1/1. Its pathway is purine metabolism; IMP biosynthesis via de novo pathway; IMP from 5-formamido-1-(5-phospho-D-ribosyl)imidazole-4-carboxamide: step 1/1. The polypeptide is Bifunctional purine biosynthesis protein PurH (Salmonella paratyphi C (strain RKS4594)).